The chain runs to 324 residues: MAPSFVTIDTTPDFDMAPAPSFQPMSTGSPSKRTLLLAPPSIATQEEKLRDLFTAFDRSTTDLQMLDRISAGFVSLPANTYDHILVLTDTDGTRRSEALHLLTRDVYTALVPCMKAGAKLQTQDNFFGEAEEREAVLAGLIKTDAGFEKMDQPKSFAIPLRRNGKKKDAAKTETFAPAPAPAPPVQPVTVGMINNDDDYENDDDLIDEDTLLSDEDLKRPIQPPECQPKPGRRRRACKDCTCGLAARLEAEEQAEREKADKALNVMKLETEDLNELDFTVQGKTGSCGNCALGDAFRCAGCPFIGLPAFKPGQEVQILENVAQL.

The interval 28 to 158 (GSPSKRTLLL…KMDQPKSFAI (131 aa)) is N-terminal SAM-like domain. The interval 159–217 (PLRRNGKKKDAAKTETFAPAPAPAPPVQPVTVGMINNDDDYENDDDLIDEDTLLSDEDL) is linker. The [2Fe-2S] cluster site is built by Cys-226, Cys-237, Cys-240, and Cys-242. The segment at 226–242 (CQPKPGRRRRACKDCTC) is fe-S binding site A. [4Fe-4S] cluster-binding residues include Cys-287, Cys-290, Cys-298, and Cys-301. Short sequence motifs (cx2C motif) lie at residues 287–290 (CGNC) and 298–301 (CAGC). Residues 287 to 301 (CGNCALGDAFRCAGC) form a fe-S binding site B region.

This sequence belongs to the anamorsin family. Monomer. Interacts with tah18. Interacts with mia40. Requires [2Fe-2S] cluster as cofactor. It depends on [4Fe-4S] cluster as a cofactor.

The protein localises to the cytoplasm. The protein resides in the mitochondrion intermembrane space. Functionally, component of the cytosolic iron-sulfur (Fe-S) protein assembly (CIA) machinery required for the maturation of extramitochondrial Fe-S proteins. Part of an electron transfer chain functioning in an early step of cytosolic Fe-S biogenesis, facilitating the de novo assembly of a [4Fe-4S] cluster on the scaffold complex cfd1-nbp35. Electrons are transferred to dre2 from NADPH via the FAD- and FMN-containing protein tah18. Tah18-dre2 are also required for the assembly of the diferric tyrosyl radical cofactor of ribonucleotide reductase (RNR), probably by providing electrons for reduction during radical cofactor maturation in the catalytic small subunit rnr2. This Aspergillus niger (strain ATCC MYA-4892 / CBS 513.88 / FGSC A1513) protein is Fe-S cluster assembly protein dre2.